The chain runs to 116 residues: Large ribosomal subunit protein bL20 (116 aa).

It belongs to the bacterial ribosomal protein bL20 family.

Binds directly to 23S ribosomal RNA and is necessary for the in vitro assembly process of the 50S ribosomal subunit. It is not involved in the protein synthesizing functions of that subunit. In Mycoplasmopsis pulmonis (strain UAB CTIP) (Mycoplasma pulmonis), this protein is Large ribosomal subunit protein bL20.